We begin with the raw amino-acid sequence, 158 residues long: Dihydroneopterin triphosphate diphosphatase (158 aa).

Residues Lys14, Arg36, and Thr47 each contribute to the substrate site. A Nudix hydrolase domain is found at 14-153; that stretch reads KNNQSVLVVI…NNAEAIKKYL (140 aa). Positions 48–69 match the Nudix box motif; the sequence is GTIESDETPKKTAIRELWEEVR. Mg(2+) contacts are provided by Glu63 and Glu67. Residue 88–91 participates in substrate binding; sequence FEIF. Mg(2+) is bound at residue Glu124. Ser142 lines the substrate pocket.

It belongs to the Nudix hydrolase family. It depends on Mg(2+) as a cofactor.

The enzyme catalyses 7,8-dihydroneopterin 3'-triphosphate + H2O = 7,8-dihydroneopterin 3'-phosphate + diphosphate + H(+). Catalyzes the hydrolysis of dihydroneopterin triphosphate to dihydroneopterin monophosphate and pyrophosphate. Required for efficient folate biosynthesis. Can also hydrolyze nucleoside triphosphates with a preference for dATP. This Haemophilus influenzae (strain ATCC 51907 / DSM 11121 / KW20 / Rd) protein is Dihydroneopterin triphosphate diphosphatase (nudB).